Here is a 204-residue protein sequence, read N- to C-terminus: MIKKTTSFRLAIFGGSFDPIHYGHLICAMDCLEQISLNKIIFMPCSRSPFKKQNPVASALQRLEMIQLAIKPFKNFEVSSFEVQSPAPSYSIRTVQEFHKLYPHAELFWIIGSDQVPGLPRWKDYAELIQIVKFIVVSRSNYYPYEKRDYLVPLPKIRYVDISSTEIRERVKKELPIFHLLPQAVFQYIKENSIYIPNRTVHEK.

This sequence belongs to the NadD family.

The enzyme catalyses nicotinate beta-D-ribonucleotide + ATP + H(+) = deamido-NAD(+) + diphosphate. It participates in cofactor biosynthesis; NAD(+) biosynthesis; deamido-NAD(+) from nicotinate D-ribonucleotide: step 1/1. Its function is as follows. Catalyzes the reversible adenylation of nicotinate mononucleotide (NaMN) to nicotinic acid adenine dinucleotide (NaAD). This Methylacidiphilum infernorum (isolate V4) (Methylokorus infernorum (strain V4)) protein is Probable nicotinate-nucleotide adenylyltransferase.